The chain runs to 227 residues: Cytochrome c oxidase subunit 2 (227 aa).

The Mitochondrial intermembrane segment spans residues 1–14 (MAYPFQMGLQDATS). The chain crosses the membrane as a helical span at residues 15–45 (PIMEELLHFHDHTLMIVFLISSLVLYIISLM). Residues 46–59 (LTTKLTHTSTMDAQ) are Mitochondrial matrix-facing. The helical transmembrane segment at 60-87 (EVETIWTILPAIILILIALPSLRILYMM) threads the bilayer. At 88–227 (DEINNPSLTV…HFEKWSASLL (140 aa)) the chain is on the mitochondrial intermembrane side. Cu cation-binding residues include histidine 161, cysteine 196, glutamate 198, cysteine 200, histidine 204, and methionine 207. Glutamate 198 contacts Mg(2+).

It belongs to the cytochrome c oxidase subunit 2 family. As to quaternary structure, component of the cytochrome c oxidase (complex IV, CIV), a multisubunit enzyme composed of 14 subunits. The complex is composed of a catalytic core of 3 subunits MT-CO1, MT-CO2 and MT-CO3, encoded in the mitochondrial DNA, and 11 supernumerary subunits COX4I, COX5A, COX5B, COX6A, COX6B, COX6C, COX7A, COX7B, COX7C, COX8 and NDUFA4, which are encoded in the nuclear genome. The complex exists as a monomer or a dimer and forms supercomplexes (SCs) in the inner mitochondrial membrane with NADH-ubiquinone oxidoreductase (complex I, CI) and ubiquinol-cytochrome c oxidoreductase (cytochrome b-c1 complex, complex III, CIII), resulting in different assemblies (supercomplex SCI(1)III(2)IV(1) and megacomplex MCI(2)III(2)IV(2)). Found in a complex with TMEM177, COA6, COX18, COX20, SCO1 and SCO2. Interacts with TMEM177 in a COX20-dependent manner. Interacts with COX20. Interacts with COX16. It depends on Cu cation as a cofactor.

The protein localises to the mitochondrion inner membrane. It catalyses the reaction 4 Fe(II)-[cytochrome c] + O2 + 8 H(+)(in) = 4 Fe(III)-[cytochrome c] + 2 H2O + 4 H(+)(out). Functionally, component of the cytochrome c oxidase, the last enzyme in the mitochondrial electron transport chain which drives oxidative phosphorylation. The respiratory chain contains 3 multisubunit complexes succinate dehydrogenase (complex II, CII), ubiquinol-cytochrome c oxidoreductase (cytochrome b-c1 complex, complex III, CIII) and cytochrome c oxidase (complex IV, CIV), that cooperate to transfer electrons derived from NADH and succinate to molecular oxygen, creating an electrochemical gradient over the inner membrane that drives transmembrane transport and the ATP synthase. Cytochrome c oxidase is the component of the respiratory chain that catalyzes the reduction of oxygen to water. Electrons originating from reduced cytochrome c in the intermembrane space (IMS) are transferred via the dinuclear copper A center (CU(A)) of subunit 2 and heme A of subunit 1 to the active site in subunit 1, a binuclear center (BNC) formed by heme A3 and copper B (CU(B)). The BNC reduces molecular oxygen to 2 water molecules using 4 electrons from cytochrome c in the IMS and 4 protons from the mitochondrial matrix. This chain is Cytochrome c oxidase subunit 2 (MT-CO2), found in Ailurus fulgens (Himalayan red panda).